The following is a 239-amino-acid chain: Ribosomal RNA small subunit methyltransferase G (239 aa).

S-adenosyl-L-methionine contacts are provided by residues G79, F84, 130–131 (AE), and R149.

Belongs to the methyltransferase superfamily. RNA methyltransferase RsmG family.

It is found in the cytoplasm. Functionally, specifically methylates the N7 position of a guanine in 16S rRNA. This Lactobacillus johnsonii (strain CNCM I-12250 / La1 / NCC 533) protein is Ribosomal RNA small subunit methyltransferase G.